A 334-amino-acid polypeptide reads, in one-letter code: Fructose-1,6-bisphosphatase class 1 2 (334 aa).

Residues glutamate 92, aspartate 114, leucine 116, and aspartate 117 each coordinate Mg(2+). Residues 117 to 120 (DGSS), asparagine 208, and lysine 274 contribute to the substrate site. Residue glutamate 280 participates in Mg(2+) binding.

Belongs to the FBPase class 1 family. In terms of assembly, homotetramer. Requires Mg(2+) as cofactor.

It is found in the cytoplasm. The catalysed reaction is beta-D-fructose 1,6-bisphosphate + H2O = beta-D-fructose 6-phosphate + phosphate. It functions in the pathway carbohydrate biosynthesis; gluconeogenesis. The protein is Fructose-1,6-bisphosphatase class 1 2 of Albidiferax ferrireducens (strain ATCC BAA-621 / DSM 15236 / T118) (Rhodoferax ferrireducens).